The primary structure comprises 117 residues: Protein Turandot F (117 aa).

The signal sequence occupies residues 1–22 (MKTVILFSFLLVLLGYLGAGHA).

The protein belongs to the Turandot family.

The protein localises to the secreted. Functionally, a humoral factor that may play a role in stress tolerance. This is Protein Turandot F from Drosophila sechellia (Fruit fly).